The following is a 458-amino-acid chain: Hyaluronidase conohyal-P1 (458 aa).

The signal sequence occupies residues 1 to 18 (MRVVVVVTGLVVVVVATA). The tract at residues 24 to 47 (HDVKSASSPLSSSSVYQGSSGDDC) is disordered. The segment covering 28 to 43 (SASSPLSSSSVYQGSS) has biased composition (low complexity). A disulfide bridge links Cys-68 with Cys-342. N-linked (GlcNAc...) asparagine glycans are attached at residues Asn-106 and Asn-141. The active-site Proton donor is the Glu-151. N-linked (GlcNAc...) asparagine glycosylation is found at Asn-261, Asn-337, and Asn-359. In terms of domain architecture, EGF-like spans 363–434 (VMADCSTTLC…VRPSRCHKQQ (72 aa)). 3 disulfide bridges follow: Cys-367-Cys-378, Cys-372-Cys-411, and Cys-413-Cys-422.

The protein belongs to the glycosyl hydrolase 56 family. As to expression, expressed by the venom duct.

It localises to the secreted. The enzyme catalyses Random hydrolysis of (1-&gt;4)-linkages between N-acetyl-beta-D-glucosamine and D-glucuronate residues in hyaluronate.. Its function is as follows. Hyaluronidase catalyzes the hydrolysis of hyaluronic acid (HA), an anionic, nonsulfated glycosaminoglycan distributed widely throughout connective, epithelial, and neural tissues. In venom, they are known to enhance diffusion of the venom by degrading the extracellular matrix. The protein is Hyaluronidase conohyal-P1 of Conus purpurascens (Purple cone).